Reading from the N-terminus, the 139-residue chain is Small ribosomal subunit protein uS12 (139 aa).

The segment at 1 to 44 is disordered; the sequence is MPTINQLVKKPRTSKVKKSTAPALNKGYNSHKKKATDLASPQKR. The span at 9–18 shows a compositional bias: basic residues; it reads KKPRTSKVKK. Asp-102 is subject to 3-methylthioaspartic acid.

This sequence belongs to the universal ribosomal protein uS12 family. In terms of assembly, part of the 30S ribosomal subunit. Contacts proteins S8 and S17. May interact with IF1 in the 30S initiation complex.

With S4 and S5 plays an important role in translational accuracy. In terms of biological role, interacts with and stabilizes bases of the 16S rRNA that are involved in tRNA selection in the A site and with the mRNA backbone. Located at the interface of the 30S and 50S subunits, it traverses the body of the 30S subunit contacting proteins on the other side and probably holding the rRNA structure together. The combined cluster of proteins S8, S12 and S17 appears to hold together the shoulder and platform of the 30S subunit. In Macrococcus caseolyticus (strain JCSC5402) (Macrococcoides caseolyticum), this protein is Small ribosomal subunit protein uS12.